The chain runs to 125 residues: Monothiol glutaredoxin-S2 (125 aa).

A Glutaredoxin domain is found at 28-124 (AERVGRLVRE…PRLREVGALC (97 aa)). Cysteine 48 lines the [2Fe-2S] cluster pocket.

The protein belongs to the glutaredoxin family. CC-type subfamily.

The protein localises to the cytoplasm. In terms of biological role, may only reduce GSH-thiol disulfides, but not protein disulfides. The protein is Monothiol glutaredoxin-S2 (GRXS2) of Oryza sativa subsp. japonica (Rice).